Here is a 247-residue protein sequence, read N- to C-terminus: ATP synthase subunit a, chloroplastic (247 aa).

The next 5 membrane-spanning stretches (helical) occupy residues 38-58 (QVLI…ALAV), 95-115 (VPFI…GALL), 134-154 (INTT…AGLT), 199-219 (LVVV…VMFL), and 220-240 (GLFT…AYIG).

It belongs to the ATPase A chain family. As to quaternary structure, F-type ATPases have 2 components, CF(1) - the catalytic core - and CF(0) - the membrane proton channel. CF(1) has five subunits: alpha(3), beta(3), gamma(1), delta(1), epsilon(1). CF(0) has four main subunits: a, b, b' and c.

It localises to the plastid. The protein resides in the chloroplast thylakoid membrane. Functionally, key component of the proton channel; it plays a direct role in the translocation of protons across the membrane. The protein is ATP synthase subunit a, chloroplastic of Helianthus annuus (Common sunflower).